Consider the following 141-residue polypeptide: Hemoglobin subunit alpha-1/2 (141 aa).

One can recognise a Globin domain in the interval V1–R141. At S3 the chain carries Phosphoserine. Residue K7 is modified to N6-succinyllysine. The residue at position 8 (T8) is a Phosphothreonine. K11 is subject to N6-succinyllysine. Position 16 is an N6-acetyllysine; alternate (K16). Position 16 is an N6-succinyllysine; alternate (K16). Phosphotyrosine is present on Y24. The residue at position 35 (S35) is a Phosphoserine. K40 carries the post-translational modification N6-succinyllysine. Residue S49 is modified to Phosphoserine. H58 serves as a coordination point for O2. Residue H87 coordinates heme b. Phosphoserine is present on S102. T108 carries the phosphothreonine modification. Phosphoserine occurs at positions 124 and 131. Phosphothreonine is present on residues T134 and T137. S138 carries the phosphoserine modification.

The protein belongs to the globin family. As to quaternary structure, heterotetramer of two alpha chains and two beta chains. In terms of tissue distribution, red blood cells.

Its function is as follows. Involved in oxygen transport from the lung to the various peripheral tissues. The protein is Hemoglobin subunit alpha-1/2 of Macaca speciosa (Stump-tail macaque).